Here is a 262-residue protein sequence, read N- to C-terminus: Indole-3-glycerol phosphate synthase (262 aa).

This sequence belongs to the TrpC family.

It catalyses the reaction 1-(2-carboxyphenylamino)-1-deoxy-D-ribulose 5-phosphate + H(+) = (1S,2R)-1-C-(indol-3-yl)glycerol 3-phosphate + CO2 + H2O. It functions in the pathway amino-acid biosynthesis; L-tryptophan biosynthesis; L-tryptophan from chorismate: step 4/5. This is Indole-3-glycerol phosphate synthase from Aromatoleum aromaticum (strain DSM 19018 / LMG 30748 / EbN1) (Azoarcus sp. (strain EbN1)).